A 117-amino-acid polypeptide reads, in one-letter code: Protein Wnt-6 (117 aa).

S1 carries the O-palmitoleoyl serine; by PORCN lipid modification. A disulfide bridge links C83 with C98. The N-linked (GlcNAc...) asparagine glycan is linked to N84.

It belongs to the Wnt family. In terms of processing, palmitoleoylation is required for efficient binding to frizzled receptors. Depalmitoleoylation leads to Wnt signaling pathway inhibition.

Its subcellular location is the secreted. The protein localises to the extracellular space. The protein resides in the extracellular matrix. In terms of biological role, ligand for members of the frizzled family of seven transmembrane receptors. Probable developmental protein. May be a signaling molecule which affects the development of discrete regions of tissues. Is likely to signal over only few cell diameters. The polypeptide is Protein Wnt-6 (WNT-6) (Evasterias troschelii (Mottled sea star)).